We begin with the raw amino-acid sequence, 420 residues long: Inheritance of peroxisomes protein 1 (420 aa).

A compositionally biased stretch (basic and acidic residues) spans 1 to 10 (MVLSRGETKK). 2 disordered regions span residues 1–75 (MVLS…QRKR) and 273–309 (SLSD…NYDD). Over residues 30 to 39 (LKQSLKLSNN) the composition is skewed to low complexity. Residues 45 to 56 (DSTQHSNDTNKS) are compositionally biased toward polar residues. Serine 273 carries the post-translational modification Phosphoserine. Residues 295–309 (NNDDDNDDDDDNYDD) show a composition bias toward acidic residues.

This sequence belongs to the INP1 family. In terms of assembly, interacts with PEX25, PEX30 and VPS1.

The protein localises to the peroxisome membrane. Its function is as follows. Required for peroxisome inheritance. In Saccharomyces cerevisiae (strain ATCC 204508 / S288c) (Baker's yeast), this protein is Inheritance of peroxisomes protein 1 (INP1).